The following is a 315-amino-acid chain: Kiwa protein KwaB (315 aa).

Functionally, component of antiviral defense system Kiwa, composed of KwaA and KwaB. Expression of Kiwa in E.coli (strain MG1655) confers resistance to phages lambda and SECphi18. The chain is Kiwa protein KwaB from Escherichia coli O55:H7 (strain RM12579 / EPEC).